A 284-amino-acid chain; its full sequence is Acetylglutamate kinase (284 aa).

Residues glycine 54–glycine 55, arginine 76, and asparagine 179 contribute to the substrate site.

Belongs to the acetylglutamate kinase family. ArgB subfamily.

The protein localises to the cytoplasm. It catalyses the reaction N-acetyl-L-glutamate + ATP = N-acetyl-L-glutamyl 5-phosphate + ADP. It functions in the pathway amino-acid biosynthesis; L-arginine biosynthesis; N(2)-acetyl-L-ornithine from L-glutamate: step 2/4. Its function is as follows. Catalyzes the ATP-dependent phosphorylation of N-acetyl-L-glutamate. The chain is Acetylglutamate kinase from Sorangium cellulosum (strain So ce56) (Polyangium cellulosum (strain So ce56)).